Here is a 131-residue protein sequence, read N- to C-terminus: Profilin-A (131 aa).

The protein belongs to the profilin family. As to quaternary structure, occurs in many kinds of cells as a complex with monomeric actin in a 1:1 ratio.

It is found in the cytoplasm. Its subcellular location is the cytoskeleton. Binds to actin and affects the structure of the cytoskeleton. At high concentrations, profilin prevents the polymerization of actin, whereas it enhances it at low concentrations. By binding to PIP2, it inhibits the formation of IP3 and DG. May serve as a modulator in pollen germination and pollen tube growth. The protein is Profilin-A of Oryza sativa subsp. japonica (Rice).